Consider the following 556-residue polypeptide: Arginine--tRNA ligase (556 aa).

The 'HIGH' region motif lies at 132–142 (ANPTGDLHLGH).

It belongs to the class-I aminoacyl-tRNA synthetase family. In terms of assembly, monomer.

The protein resides in the cytoplasm. The catalysed reaction is tRNA(Arg) + L-arginine + ATP = L-arginyl-tRNA(Arg) + AMP + diphosphate. This Listeria welshimeri serovar 6b (strain ATCC 35897 / DSM 20650 / CCUG 15529 / CIP 8149 / NCTC 11857 / SLCC 5334 / V8) protein is Arginine--tRNA ligase.